A 202-amino-acid polypeptide reads, in one-letter code: Pectinesterase inhibitor 11 (202 aa).

The N-terminal stretch at 1-21 (MAKQIFYTLFLFLLSTAILTA) is a signal peptide. Cysteines 43 and 52 form a disulfide. Residue Asn-76 is glycosylated (N-linked (GlcNAc...) asparagine). A disulfide bridge links Cys-109 with Cys-160.

Belongs to the PMEI family.

The protein resides in the secreted. Its subcellular location is the extracellular space. It is found in the apoplast. In terms of biological role, pectin methylesterase (PME) inhibitor involved in the maintenance of cell wall integrity in response to necrotrophic pathogens. Modulates PME activity and pectin methylesterification during infection by Botrytis cinerea and contributes to resistance against the pathogen. The polypeptide is Pectinesterase inhibitor 11 (Arabidopsis thaliana (Mouse-ear cress)).